The primary structure comprises 244 residues: Chalcone--flavanone isomerase (244 aa).

The substrate site is built by threonine 45, asparagine 110, and serine 187.

This sequence belongs to the chalcone isomerase family.

It carries out the reaction a chalcone = a flavanone.. It functions in the pathway secondary metabolite biosynthesis; flavonoid biosynthesis. Catalyzes the intramolecular cyclization of bicyclic chalcones into tricyclic (S)-flavanones. Responsible for the isomerization of 4,2',4',6'-tetrahydroxychalcone (also termed chalcone) into naringenin. The sequence is that of Chalcone--flavanone isomerase (CHI) from Nicotiana tabacum (Common tobacco).